Consider the following 158-residue polypeptide: C-type lectin mannose-binding isoform (158 aa).

A signal peptide spans 1-23; sequence MGRFLLVTLSLLVGAFSLNEANS. Disulfide bonds link C26–C37, C54–C154, C61–C156, and C129–C146. In terms of domain architecture, C-type lectin spans 33 to 155; the sequence is KNGFCYKVFN…CKALYSFICQ (123 aa). The Mannose-binding signature appears at 119–121; the sequence is EPN. A glycan (N-linked (GlcNAc...) asparagine) is linked at N121. Residues E127, N142, and D143 each coordinate Ca(2+).

Belongs to the true venom lectin family. Dimer. Probably disulfide-linked homodimer. Expressed by the venom gland.

The protein resides in the secreted. Its function is as follows. Mannose-binding lectin that binds to and agglutinates rabbit (but not human) erythrocytes in a calcium-dependent manner. This Oxyuranus scutellatus (Coastal taipan) protein is C-type lectin mannose-binding isoform.